The primary structure comprises 233 residues: Large ribosomal subunit protein uL1 (233 aa).

It belongs to the universal ribosomal protein uL1 family. Part of the 50S ribosomal subunit.

Functionally, binds directly to 23S rRNA. The L1 stalk is quite mobile in the ribosome, and is involved in E site tRNA release. Its function is as follows. Protein L1 is also a translational repressor protein, it controls the translation of the L11 operon by binding to its mRNA. The chain is Large ribosomal subunit protein uL1 from Deinococcus deserti (strain DSM 17065 / CIP 109153 / LMG 22923 / VCD115).